Here is a 164-residue protein sequence, read N- to C-terminus: Photosystem II extrinsic protein V (164 aa).

Positions 1 to 27 (MALKSKFLVGSILATFILNGFSSPAQA) are cleaved as a signal peptide. The heme c site is built by Cys-64, Cys-67, His-68, and His-119.

The protein belongs to the cytochrome c family. PsbV subfamily. In terms of assembly, PSII is composed of 1 copy each of membrane proteins PsbA, PsbB, PsbC, PsbD, PsbE, PsbF, PsbH, PsbI, PsbJ, PsbK, PsbL, PsbM, PsbT, PsbY, PsbZ, Psb30/Ycf12, at least 3 peripheral proteins of the oxygen-evolving complex and a large number of cofactors. It forms dimeric complexes. The cofactor is heme c.

Its subcellular location is the plastid. It localises to the chloroplast thylakoid membrane. Functionally, one of the extrinsic, lumenal subunits of photosystem II (PSII). PSII is a light-driven water plastoquinone oxidoreductase, using light energy to abstract electrons from H(2)O, generating a proton gradient subsequently used for ATP formation. The extrinsic proteins stabilize the structure of photosystem II oxygen-evolving complex (OEC), the ion environment of oxygen evolution and protect the OEC against heat-induced inactivation. The chain is Photosystem II extrinsic protein V from Emiliania huxleyi (Coccolithophore).